A 384-amino-acid polypeptide reads, in one-letter code: Homoserine O-succinyltransferase (384 aa).

Residues 51–361 enclose the AB hydrolase-1 domain; that stretch reads NAILICHALS…ETSQGHDAFL (311 aa). The active-site Nucleophile is serine 157. Substrate is bound at residue arginine 227. Active-site residues include aspartate 324 and histidine 357. Aspartate 358 serves as a coordination point for substrate.

This sequence belongs to the AB hydrolase superfamily. MetX family. Homodimer.

The protein localises to the cytoplasm. The catalysed reaction is L-homoserine + succinyl-CoA = O-succinyl-L-homoserine + CoA. The protein operates within amino-acid biosynthesis; L-methionine biosynthesis via de novo pathway; O-succinyl-L-homoserine from L-homoserine: step 1/1. In terms of biological role, transfers a succinyl group from succinyl-CoA to L-homoserine, forming succinyl-L-homoserine. This Alkalilimnicola ehrlichii (strain ATCC BAA-1101 / DSM 17681 / MLHE-1) protein is Homoserine O-succinyltransferase.